The following is a 246-amino-acid chain: Salivary antigen SP32 (246 aa).

The first 23 residues, 1-23, serve as a signal peptide directing secretion; sequence MSGHILTVGLIVVVAHCATLSSS. Residues 51-160 are disordered; it reads DKFYPDISDD…PDLSKYKNSP (110 aa). Residues 65 to 78 show a composition bias toward basic and acidic residues; the sequence is VVRDNGRKGGDRGR. Over residues 79 to 124 the composition is skewed to polar residues; sequence QSTPSGKESHPSATQTGGRRPSQSPCGESRPSGSATSGRRPSQSPR. Basic and acidic residues predominate over residues 141–155; it reads QQDRRQNKKQPDLSK.

In terms of assembly, interacts with human DSG1. Interacts with human DSG3. In terms of tissue distribution, salivary gland (at protein level).

Its subcellular location is the secreted. Functionally, down-regulates the expression of CD86 and HLA-DR on the surface of lipopolysaccharide (LPS)-stimulated human peripheral blood mononuclear cells (PBMCs). Reduces LPS-induced secretion of IL-1beta/IL1B in human PBMCs. Reduces LPS-induced secretion of various cytokines, such as IL-1beta, TNF-alpha/TNF, MCP-1/CCL2, IL6, IL27 and IL-1alpha/IL1A, in host cultured macrophages probably via inhibition of NF-kappa-B signaling pathway. Reduces production of IFN-gamma/IFNG, IL4 and IL6 in human lymphocytes activated with PMA/ionomycin. Exhibits anti-inflammatory activity in carrageenan-induced paw edema model in rats. This chain is Salivary antigen SP32, found in Phlebotomus papatasi (Sandfly).